We begin with the raw amino-acid sequence, 234 residues long: DNA repair protein RecO (234 aa).

It belongs to the RecO family.

In terms of biological role, involved in DNA repair and RecF pathway recombination. The sequence is that of DNA repair protein RecO from Coxiella burnetii (strain RSA 331 / Henzerling II).